The sequence spans 97 residues: Putative septation protein SpoVG (97 aa).

It belongs to the SpoVG family.

Functionally, essential for sporulation. Interferes with or is a negative regulator of the pathway leading to asymmetric septation. The sequence is that of Putative septation protein SpoVG from Bacillus licheniformis (strain ATCC 14580 / DSM 13 / JCM 2505 / CCUG 7422 / NBRC 12200 / NCIMB 9375 / NCTC 10341 / NRRL NRS-1264 / Gibson 46).